The primary structure comprises 510 residues: NAD(P)H-quinone oxidoreductase subunit 2, chloroplastic (510 aa).

Helical transmembrane passes span 24 to 44 (LLLF…GLIL), 59 to 79 (WFYF…LFRW), 99 to 119 (IFQF…VEYI), 124 to 144 (MAIT…MFLC), 149 to 169 (LITI…LSGY), 184 to 204 (LLMG…LYGL), 229 to 249 (ISIA…PAPF), 295 to 315 (WHLL…LIAI), 323 to 343 (MLAY…IVGD), 347 to 367 (GYAS…GTFA), 395 to 415 (ALSL…AGFF), and 418 to 438 (LHLF…IGLL).

The protein belongs to the complex I subunit 2 family. NDH is composed of at least 16 different subunits, 5 of which are encoded in the nucleus.

The protein resides in the plastid. It is found in the chloroplast thylakoid membrane. The enzyme catalyses a plastoquinone + NADH + (n+1) H(+)(in) = a plastoquinol + NAD(+) + n H(+)(out). It carries out the reaction a plastoquinone + NADPH + (n+1) H(+)(in) = a plastoquinol + NADP(+) + n H(+)(out). Its function is as follows. NDH shuttles electrons from NAD(P)H:plastoquinone, via FMN and iron-sulfur (Fe-S) centers, to quinones in the photosynthetic chain and possibly in a chloroplast respiratory chain. The immediate electron acceptor for the enzyme in this species is believed to be plastoquinone. Couples the redox reaction to proton translocation, and thus conserves the redox energy in a proton gradient. This is NAD(P)H-quinone oxidoreductase subunit 2, chloroplastic from Muilla maritima (Sea muilla).